Reading from the N-terminus, the 550-residue chain is Hydroxylamine reductase (550 aa).

[2Fe-2S] cluster-binding residues include cysteine 3, cysteine 6, cysteine 18, and cysteine 25. Hybrid [4Fe-2O-2S] cluster-binding residues include histidine 249, glutamate 273, cysteine 317, cysteine 405, cysteine 433, cysteine 458, glutamate 492, and lysine 494. Residue cysteine 405 is modified to Cysteine persulfide.

It belongs to the HCP family. [2Fe-2S] cluster is required as a cofactor. Hybrid [4Fe-2O-2S] cluster serves as cofactor.

It is found in the cytoplasm. It catalyses the reaction A + NH4(+) + H2O = hydroxylamine + AH2 + H(+). Functionally, catalyzes the reduction of hydroxylamine to form NH(3) and H(2)O. The protein is Hydroxylamine reductase of Salmonella typhimurium (strain LT2 / SGSC1412 / ATCC 700720).